We begin with the raw amino-acid sequence, 130 residues long: Small ribosomal subunit protein uS9 (130 aa).

This sequence belongs to the universal ribosomal protein uS9 family.

The sequence is that of Small ribosomal subunit protein uS9 from Bacillus cytotoxicus (strain DSM 22905 / CIP 110041 / 391-98 / NVH 391-98).